The primary structure comprises 579 residues: Type II methyltransferase M.BseCI (579 aa).

It belongs to the N(4)/N(6)-methyltransferase family.

It catalyses the reaction a 2'-deoxyadenosine in DNA + S-adenosyl-L-methionine = an N(6)-methyl-2'-deoxyadenosine in DNA + S-adenosyl-L-homocysteine + H(+). Its function is as follows. A gamma subtype methylase, recognizes the double-stranded sequence 5'-ATCGAT-3', methylation on A-5 on both strands, and protects the DNA from cleavage by the BanIII endonuclease. This Geobacillus stearothermophilus (Bacillus stearothermophilus) protein is Type II methyltransferase M.BseCI.